We begin with the raw amino-acid sequence, 435 residues long: Bud site selection protein RAX1 (435 aa).

Topologically, residues 1–297 are cytoplasmic; it reads MKEELSKVSS…PFSNHTSISR (297 aa). An RGS domain is found at 159–248; sequence VDEIMKRRSQ…LEMDCFPKFL (90 aa). Ser167 carries the phosphoserine modification. A helical transmembrane segment spans residues 298-318; that stretch reads IGFGLLWLGIGFWIGYVLIFL. Topologically, residues 319-325 are extracellular; the sequence is AYSRAIR. The chain crosses the membrane as a helical span at residues 326 to 346; sequence VVTVVPFTLGCYCIVCGMYQV. Residues 347–409 lie on the Cytoplasmic side of the membrane; that stretch reads DIVYSWFGVT…FTRQLLRKRG (63 aa). A helical membrane pass occupies residues 410 to 430; sequence LWCLLLVVGATAAFTVIFSCV. The Extracellular segment spans residues 431 to 435; it reads PGRRV.

As to quaternary structure, forms an heterodimeric complex with RAX2. Also interacts with BUD8 and BUD9.

The protein resides in the cell membrane. Its subcellular location is the bud neck. It is found in the bud tip. Required for the establishment of the bipolar budding pattern. Involved in selecting bud sites at both the distal and proximal poles of daughter cells as well as near previously used division sites on mother cells. The RAX1-RAX2 complex performs the asymmetric localization of the two cortical landmarks, BUD8 and BUD9, at the distal and proximal poles, respectively. In Saccharomyces cerevisiae (strain ATCC 204508 / S288c) (Baker's yeast), this protein is Bud site selection protein RAX1.